Here is a 161-residue protein sequence, read N- to C-terminus: Arachidonate 5-lipoxygenase-activating protein (161 aa).

At 1–8 the chain is on the lumenal side; that stretch reads MDQEAVGN. The chain crosses the membrane as a helical span at residues 9-30; it reads IVLLAIVTLISVVQNGFFAHKV. Residues 31 to 52 lie on the Cytoplasmic side of the membrane; the sequence is EHESKTHNGRSFQRTGTLAFER. The helical transmembrane segment at 53 to 77 threads the bilayer; sequence VYTANQNCVDAYPTFLVMLWSAGLL. Topologically, residues 78 to 80 are lumenal; sequence CSQ. The helical transmembrane segment at 81–102 threads the bilayer; the sequence is VPAAFAGLMYLFVRQKYFVGYL. The Cytoplasmic portion of the chain corresponds to 103 to 107; sequence GERTQ. An intramembrane segment occupies 108–115; sequence STPGYIFG. Residues 116-128 traverse the membrane as a helical segment; sequence KRIILFLFAMSLA. Residues 129-161 are Lumenal-facing; the sequence is GILNYFFIALFGSDFENYIKTVTTTISPLLLIP.

It belongs to the MAPEG family. Homotrimer. Interacts with LTC4S and ALOX5.

It is found in the nucleus membrane. The protein localises to the endoplasmic reticulum membrane. In terms of biological role, required for leukotriene biosynthesis by ALOX5 (5-lipoxygenase). Anchors ALOX5 to the membrane. Binds arachidonic acid, and could play an essential role in the transfer of arachidonic acid to ALOX5. Binds to MK-886, a compound that blocks the biosynthesis of leukotrienes. The protein is Arachidonate 5-lipoxygenase-activating protein (ALOX5AP) of Bos taurus (Bovine).